We begin with the raw amino-acid sequence, 361 residues long: Mitogen-activated protein kinase 14A (361 aa).

One can recognise a Protein kinase domain in the interval 25 to 309 (YQNLSPVGSG…AAEALAHPYF (285 aa)). ATP is bound by residues 31–39 (VGSGAYGTV) and K54. Catalysis depends on D151, which acts as the Proton acceptor. T181 carries the post-translational modification Phosphothreonine; by MAP2K6. A TXY motif is present at residues 181–183 (TGY). Y183 carries the phosphotyrosine; by MAP2K6 modification.

The protein belongs to the protein kinase superfamily. CMGC Ser/Thr protein kinase family. MAP kinase subfamily. The cofactor is Mg(2+). In terms of processing, dually phosphorylated on Thr-181 and Tyr-183, which activates the enzyme. In terms of tissue distribution, exclusively expressed in the ovary.

It is found in the cytoplasm. Its subcellular location is the nucleus. The catalysed reaction is L-seryl-[protein] + ATP = O-phospho-L-seryl-[protein] + ADP + H(+). The enzyme catalyses L-threonyl-[protein] + ATP = O-phospho-L-threonyl-[protein] + ADP + H(+). With respect to regulation, activated by threonine and tyrosine phosphorylation by the dual specificity kinase, MKK6. Serine/threonine kinase which acts as an essential component of the MAP kinase signal transduction pathway. Mapk14a is one of the four p38 MAPKs which play an important role in the cascades of cellular responses evoked by extracellular stimuli such as pro-inflammatory cytokines or physical stress leading to direct activation of transcription factors. Accordingly, p38 MAPKs phosphorylate a broad range of proteins and it has been estimated that they may have approximately 200 to 300 substrates each. Some of the targets are downstream kinases which are activated through phosphorylation and further phosphorylate additional targets. This chain is Mitogen-activated protein kinase 14A (mapk14a), found in Cyprinus carpio (Common carp).